The following is a 301-amino-acid chain: uncharacterized protein (301 aa).

Over residues 16-28 (EITEESEKTKTDL) the composition is skewed to basic and acidic residues. The interval 16–38 (EITEESEKTKTDLQKANTPNKTE) is disordered. Residues 29 to 38 (QKANTPNKTE) show a composition bias toward polar residues. The 50-residue stretch at 252-301 (KENVALKMLQRCGWKEGQGLGQHNQGIINPLHVEISGFVTETKHSKINDK) folds into the G-patch domain.

This is an uncharacterized protein from Schizosaccharomyces pombe (strain 972 / ATCC 24843) (Fission yeast).